We begin with the raw amino-acid sequence, 99 residues long: Nucleoid-associated protein LCABL_24440 (99 aa).

Belongs to the YbaB/EbfC family. As to quaternary structure, homodimer.

It is found in the cytoplasm. The protein resides in the nucleoid. In terms of biological role, binds to DNA and alters its conformation. May be involved in regulation of gene expression, nucleoid organization and DNA protection. This chain is Nucleoid-associated protein LCABL_24440, found in Lacticaseibacillus casei (strain BL23) (Lactobacillus casei).